Consider the following 145-residue polypeptide: MRQTFMANESNIERKWYVIDAAGQTLGRLSSEVASILRGKHKATYTPHVDSGDYVIIINAGQIEMTGKKASDKVYYRHSNYPGGIKSITAGELREKNPERLLEISIKGMLPSSRLGEKQGKKLFVYGGAEHPHAAQQPENYELRG.

This sequence belongs to the universal ribosomal protein uL13 family. In terms of assembly, part of the 50S ribosomal subunit.

In terms of biological role, this protein is one of the early assembly proteins of the 50S ribosomal subunit, although it is not seen to bind rRNA by itself. It is important during the early stages of 50S assembly. The polypeptide is Large ribosomal subunit protein uL13 (Staphylococcus carnosus (strain TM300)).